A 1001-amino-acid polypeptide reads, in one-letter code: Chloride channel protein clh-3 (1001 aa).

Residues 1–48 lie on the Cytoplasmic side of the membrane; sequence MGIGTKILSKIEKNKTSDGLTIPLTPTTQKQSSSWCSFESIKTFFRTV. Helical transmembrane passes span 49-85 and 91-117; these read IRDWIFLALLGFIMASLSFGMDYAILNLQNGQMRLFD and HFTLAYLVWVGYVVGLILLSAVCAHYI. The short motif at 123–127 is the Selectivity filter part_1 element; it reads GSGIP. Ser-124 contributes to the chloride binding site. The segment at residues 126-133 is an intramembrane region (helical); the sequence is IPEMKTIL. A run of 2 helical transmembrane segments spans residues 142–160 and 167–185; these read LSVRTLLSKMIGLTLSLGS and EGPFVHVASVVASQLTRLV. Positions 165 to 169 match the Selectivity filter part_2 motif; that stretch reads GKEGP. 2 intramembrane regions (helical) span residues 202-214 and 218-226; these read MLAAGCAVGVACT and PIGGVLFSI. 5 helical membrane-spanning segments follow: residues 238-258, 285-313, 322-341, 405-425, and 433-456; these read YWRGFFAATCSATLFRILRMF, LPIFALIGLVCGLAGSIFVYLHRRTVLFL, IFQKYWLIYPIFIATFISSL, YSPFVTLSSFQVVYFFLAILA, and GIFMPVFVLGAAFGRLVGEGVFSL. A Selectivity filter part_3 motif is present at residues 433–437; sequence GIFMP. Chloride-binding residues include Ile-434 and Phe-435. Positions 473-487 form an intramembrane region, helical; the sequence is GVYAVVGAAAFCGAV. The note=Loop between two helices intramembrane region spans 488 to 489; it reads TH. The segment at residues 490-501 is an intramembrane region (helical); the sequence is TVSVAVIVFELT. The segment at residues 502–506 is an intramembrane region (note=Loop between two helices); it reads GQLCH. A helical transmembrane segment spans residues 507-524; that stretch reads LLPVMIAVLIANAVASYL. Over 525–1001 the chain is Cytoplasmic; sequence QPSIYDSIIR…LPDDVHDEKF (477 aa). Residue Tyr-529 participates in chloride binding. Positions 560-619 constitute a CBS 1 domain; it reads MISPLVYIAKDSTVGDIKRALETKTRIRAFPLVENMESLALVGSVSRSQLQRYVDSQIGT. Residues 625-657 adopt a coiled-coil conformation; it reads EATRRIKQRLEDEESERKRREESKSDDTEDSLE. The span at 634–650 shows a compositional bias: basic and acidic residues; that stretch reads LEDEESERKRREESKSD. The segment at 634-662 is disordered; that stretch reads LEDEESERKRREESKSDDTEDSLETTGAG. Ser-742 and Ser-747 each carry phosphoserine; by gck-3. The region spanning 788–845 is the CBS 2 domain; sequence IDSTPFQLSEYTSLFKAHSLFSLLGLNRAYVTKKGQLIGVVALKELRLAIEYLQSGKV.

This sequence belongs to the chloride channel (TC 2.A.49) family. Isoform a interacts (via RFLI motif) with gck-3 (via C-terminus). Phosphorylated by gck-3; phosphorylation at both Ser-742 and Ser-747 is required to inhibit channel activity. Dephosphorylated by gsp-1/2 during cell swelling and oocyte meiotic maturation, which results in channel activation. Expressed in excretory cell, 4 anterior epithelial cells of the intestine, hermaphrodite-specific neurons and enteric muscles. Expressed also in vulva and uterus. Isoform a is expressed in oocytes (at protein level).

The protein resides in the cell membrane. Its function is as follows. Voltage-gated chloride channel. Insensitive to depolarizing conditioning voltages, requires low voltages for activation, insensitive to chloride levels and has a mild sensitivity to low pH. Channel gating properties are conferred by the cytoplasmic C-terminus. Plays a role in egg laying by modulating hermaphrodite-specific neurons (HSN) excitability and the ovulatory contractions of gap-junction-coupled gonadal sheath cells. When active, may prevent tubular formation of the excretory canals. Activated during oocyte meiotic maturation and by membrane hyperpolarization and cell swelling. Inhibited by Zn(2+) and to a lesser extent by Cd(2+). Functionally, voltage-gated chloride channel. Sensitive to depolarizing conditioning voltages, requires stronger voltages for activation and activation is slower, is inhibited by low concentrations of chloride and is activated by low pH. Channel gating properties are conferred by the cytoplasmic C-terminus. The sequence is that of Chloride channel protein clh-3 from Caenorhabditis elegans.